Consider the following 144-residue polypeptide: Transcription antitermination protein NusB (144 aa).

The protein belongs to the NusB family.

Functionally, involved in transcription antitermination. Required for transcription of ribosomal RNA (rRNA) genes. Binds specifically to the boxA antiterminator sequence of the ribosomal RNA (rrn) operons. In Haemophilus influenzae (strain PittEE), this protein is Transcription antitermination protein NusB.